The primary structure comprises 260 residues: uncharacterized protein (260 aa).

This is an uncharacterized protein from Methanocaldococcus jannaschii (strain ATCC 43067 / DSM 2661 / JAL-1 / JCM 10045 / NBRC 100440) (Methanococcus jannaschii).